We begin with the raw amino-acid sequence, 689 residues long: Protein SDA1 homolog (689 aa).

Disordered stretches follow at residues 227–260 (DEKK…TKNK), 485–512 (EQEK…DGEW), and 623–689 (TDRK…RLMK). A coiled-coil region spans residues 258-319 (KNKKKLDKAM…RFEVKLMHMD (62 aa)). Positions 492–512 (PEEDDGWESASLSDDDEDGEW) are enriched in acidic residues. Basic and acidic residues predominate over residues 670-681 (RDKQIALRDSLL).

The protein belongs to the SDA1 family.

It localises to the nucleus. The protein localises to the nucleolus. In terms of biological role, required for 60S pre-ribosomal subunits export to the cytoplasm. The chain is Protein SDA1 homolog (sdad1) from Xenopus laevis (African clawed frog).